The sequence spans 282 residues: NH(3)-dependent NAD(+) synthetase (282 aa).

ATP is bound at residue 51 to 58 (GISGGVDS). D57 is a binding site for Mg(2+). Position 148 (R148) interacts with deamido-NAD(+). T168 contributes to the ATP binding site. Residue E173 coordinates Mg(2+). Positions 181 and 188 each coordinate deamido-NAD(+). Residues K197 and T219 each coordinate ATP. 268–269 (HK) contributes to the deamido-NAD(+) binding site.

This sequence belongs to the NAD synthetase family. Homodimer.

It carries out the reaction deamido-NAD(+) + NH4(+) + ATP = AMP + diphosphate + NAD(+) + H(+). It functions in the pathway cofactor biosynthesis; NAD(+) biosynthesis; NAD(+) from deamido-NAD(+) (ammonia route): step 1/1. Its function is as follows. Catalyzes the ATP-dependent amidation of deamido-NAD to form NAD. Uses ammonia as a nitrogen source. This is NH(3)-dependent NAD(+) synthetase from Burkholderia cenocepacia (strain HI2424).